Consider the following 413-residue polypeptide: Tryptophan synthase beta chain (413 aa).

At K106 the chain carries N6-(pyridoxal phosphate)lysine.

It belongs to the TrpB family. Tetramer of two alpha and two beta chains. It depends on pyridoxal 5'-phosphate as a cofactor.

It carries out the reaction (1S,2R)-1-C-(indol-3-yl)glycerol 3-phosphate + L-serine = D-glyceraldehyde 3-phosphate + L-tryptophan + H2O. It functions in the pathway amino-acid biosynthesis; L-tryptophan biosynthesis; L-tryptophan from chorismate: step 5/5. In terms of biological role, the beta subunit is responsible for the synthesis of L-tryptophan from indole and L-serine. The chain is Tryptophan synthase beta chain from Methylobacterium radiotolerans (strain ATCC 27329 / DSM 1819 / JCM 2831 / NBRC 15690 / NCIMB 10815 / 0-1).